Reading from the N-terminus, the 204-residue chain is ADP-ribosylation factor-like protein 15 (204 aa).

GTP contacts are provided by residues 39–46, 82–86, and 142–145; these read GLTGSGKT, ELGGA, and NHQD.

Belongs to the small GTPase superfamily. Arf family.

The chain is ADP-ribosylation factor-like protein 15 (ARL15) from Pongo abelii (Sumatran orangutan).